The following is a 738-amino-acid chain: NADH dehydrogenase [ubiquinone] iron-sulfur protein 1, mitochondrial (738 aa).

A mitochondrion-targeting transit peptide spans Met-1–Thr-27. The 79-residue stretch at Asp-66–Ile-144 folds into the 2Fe-2S ferredoxin-type domain. The [2Fe-2S] cluster site is built by Cys-100, Cys-111, Cys-114, and Cys-128. The 4Fe-4S His(Cys)3-ligated-type domain maps to Ile-144–Gly-183. Residues His-160, Cys-164, Cys-167, Cys-173, Cys-212, Cys-215, Cys-218, and Cys-262 each coordinate [4Fe-4S] cluster. A 4Fe-4S Mo/W bis-MGD-type domain is found at Leu-281 to Arg-337.

The protein belongs to the complex I 75 kDa subunit family. Complex I is composed of about 45 different subunits. This is a component of the iron-sulfur (IP) fragment of the enzyme. Requires [2Fe-2S] cluster as cofactor. [4Fe-4S] cluster serves as cofactor.

Its subcellular location is the mitochondrion inner membrane. The catalysed reaction is a ubiquinone + NADH + 5 H(+)(in) = a ubiquinol + NAD(+) + 4 H(+)(out). Functionally, core subunit of the mitochondrial membrane respiratory chain NADH dehydrogenase (Complex I) that is believed to belong to the minimal assembly required for catalysis. Complex I functions in the transfer of electrons from NADH to the respiratory chain. The immediate electron acceptor for the enzyme is believed to be ubiquinone. This is the largest subunit of complex I and it is a component of the iron-sulfur (IP) fragment of the enzyme. It may form part of the active site crevice where NADH is oxidized. The chain is NADH dehydrogenase [ubiquinone] iron-sulfur protein 1, mitochondrial from Solanum tuberosum (Potato).